Reading from the N-terminus, the 797-residue chain is Glycoprotein gp2 (797 aa).

The signal sequence occupies residues 1 to 25 (MGFIYARKLLLCMAVSIYAIGSTTT). 2 disordered regions span residues 24 to 188 (TTTE…TTAA) and 212 to 549 (AATT…EIVP). Positions 212-373 (AATTTAATTT…PDSSTGSTST (162 aa)) are enriched in low complexity. Residues 374–394 (AEPSSTFTLTPSTATPSTDQF) show a composition bias toward polar residues. 2 stretches are compositionally biased toward low complexity: residues 395-430 (TGSS…EAST) and 445-457 (TPDG…NTTP). Positions 466 to 492 (FADTQQTPDNGVSTQHTTINDHTTANA) are enriched in polar residues. Residues 495 to 505 (HAGHHRGRAGG) show a composition bias toward basic residues. N-linked (GlcNAc...) asparagine; by host glycosylation is present at asparagine 590. The helical transmembrane segment at 766-790 (FALVAATTLTVTILCLLCCLYCMLT) threads the bilayer.

The protein resides in the virion membrane. Virulence factor. The protein is Glycoprotein gp2 (EUs4) of Equine herpesvirus 1 (strain Ab4p) (EHV-1).